A 653-amino-acid polypeptide reads, in one-letter code: Chromosomal replication initiator protein DnaA (653 aa).

A domain I, interacts with DnaA modulators region spans residues 1–100 (MADVPADLAA…SAGEPPASAS (100 aa)). Residues 86-310 (ITVDDSAGEP…PAPATGPGEP (225 aa)) are disordered. A domain II region spans residues 101 to 312 (PAPPRYEEPE…PATGPGEPTA (212 aa)). Basic and acidic residues-rich tracts occupy residues 120-150 (DPYESRGREGYEGYGRHRADDHRQGHNDRHQ) and 221-267 (PSYD…RRNI). Residues 284–310 (GSALPASSGAPGPLAAQPAPATGPGEP) show a composition bias toward low complexity. Positions 313 to 529 (RLNPKYLFDT…GALIRVTAFA (217 aa)) are domain III, AAA+ region. The ATP site is built by Gly357, Gly359, Lys360, and Thr361. The tract at residues 530 to 653 (SLNRQPVDLG…TELTNRIKNG (124 aa)) is domain IV, binds dsDNA.

It belongs to the DnaA family. As to quaternary structure, oligomerizes as a right-handed, spiral filament on DNA at oriC.

It is found in the cytoplasm. Its function is as follows. Plays an essential role in the initiation and regulation of chromosomal replication. ATP-DnaA binds to the origin of replication (oriC) to initiate formation of the DNA replication initiation complex once per cell cycle. Binds the DnaA box (a 9 base pair repeat at the origin) and separates the double-stranded (ds)DNA. Forms a right-handed helical filament on oriC DNA; dsDNA binds to the exterior of the filament while single-stranded (ss)DNA is stabiized in the filament's interior. The ATP-DnaA-oriC complex binds and stabilizes one strand of the AT-rich DNA unwinding element (DUE), permitting loading of DNA polymerase. After initiation quickly degrades to an ADP-DnaA complex that is not apt for DNA replication. Binds acidic phospholipids. The chain is Chromosomal replication initiator protein DnaA from Streptomyces avermitilis (strain ATCC 31267 / DSM 46492 / JCM 5070 / NBRC 14893 / NCIMB 12804 / NRRL 8165 / MA-4680).